A 308-amino-acid chain; its full sequence is MTEITAAMVKELREKSGAGMMDCKKALAETNGDMEAAIDWLRAKGIAKADKKSGRTAAEGLIGVATMGHKAVVVELNSETDFVARNDAFQDLIRGIAQVALTTDGTVDAVSAATYPATGKSVADSIKDAIATIGENMTLRRSAALEVPHGVVATYVHNAAGDGIGKLGVLVALKSEGDKAVLNSIGRQVAMHIAATNPLAIRAEEVDAAVAERERNVFIEQARESGKPEAIIEKMVDGRMRKFFEEVALLSQAFVINPDITVGAAIKEVEKEAGASIEVTGMVRLLLGEGVEKEESDFAAEVAAVAKG.

The involved in Mg(2+) ion dislocation from EF-Tu stretch occupies residues T80–V83.

It belongs to the EF-Ts family.

It is found in the cytoplasm. In terms of biological role, associates with the EF-Tu.GDP complex and induces the exchange of GDP to GTP. It remains bound to the aminoacyl-tRNA.EF-Tu.GTP complex up to the GTP hydrolysis stage on the ribosome. This is Elongation factor Ts from Agrobacterium fabrum (strain C58 / ATCC 33970) (Agrobacterium tumefaciens (strain C58)).